Here is an 877-residue protein sequence, read N- to C-terminus: Leucine--tRNA ligase (877 aa).

The 'HIGH' region signature appears at 43 to 53; sequence PYPSGRIHMGH. Residues 628–632 carry the 'KMSKS' region motif; that stretch reads KMSKS. An ATP-binding site is contributed by K631.

The protein belongs to the class-I aminoacyl-tRNA synthetase family.

The protein resides in the cytoplasm. The enzyme catalyses tRNA(Leu) + L-leucine + ATP = L-leucyl-tRNA(Leu) + AMP + diphosphate. This is Leucine--tRNA ligase from Brucella canis (strain ATCC 23365 / NCTC 10854 / RM-666).